The sequence spans 245 residues: Transcriptional regulatory protein VxrB (245 aa).

The Response regulatory domain maps to 31-142 (TLLLVEDDKN…ELFARIRAQL (112 aa)). D78 bears the 4-aspartylphosphate mark. The ompR/PhoB-type DNA-binding region spans 151–245 (DSKVVTSNLT…LRGVGYKMKA (95 aa)).

Phosphorylated by VxrA.

It localises to the cytoplasm. In terms of biological role, member of the two-component regulatory system VxrB/VxrA involved in the regulation of diverses processes, including virulence, the type VI secretion system (T6SS) and biofilm formation. VxrB positively regulates the expression of the T6SS, a virulence nanomachine that directly translocates effectors into bacterial or host cells, thereby facilitating colonization by competing with sister cells and intestinal microbiota. In addition, it activates vpsL expression and biofilm formation, and represses motility. May regulate biofilm formation via its regulation of key biofilm regulators and cyclic di-GMP levels. Significantly contributes to both attack and defense via T6SS, while also influencing competition via regulation of biofilm matrix production. Is critical for colonization in the infant mouse model. In Vibrio cholerae serotype O1 (strain ATCC 39315 / El Tor Inaba N16961), this protein is Transcriptional regulatory protein VxrB.